The primary structure comprises 355 residues: Probable nitronate monooxygenase (355 aa).

Residues asparagine 71, glutamine 175, glycine 180, glycine 218, and 237–240 contribute to the FMN site; that span reads QMGT.

It belongs to the nitronate monooxygenase family. NMO class I subfamily. FMN is required as a cofactor.

It catalyses the reaction 3 propionate 3-nitronate + 3 O2 + H2O = 3 3-oxopropanoate + 2 nitrate + nitrite + H2O2 + 3 H(+). Functionally, nitronate monooxygenase that uses molecular oxygen to catalyze the oxidative denitrification of alkyl nitronates. Acts on propionate 3-nitronate (P3N), the presumed physiological substrate. Probably functions in the detoxification of P3N, a metabolic poison produced by plants and fungi as a defense mechanism. This chain is Probable nitronate monooxygenase, found in Staphylococcus aureus (strain USA300).